A 222-amino-acid chain; its full sequence is RNA chaperone ProQ (222 aa).

Residues 94–113 (EHADHAKQQLDESKAKAAEK) are compositionally biased toward basic and acidic residues. The disordered stretch occupies residues 94–171 (EHADHAKQQL…PAKLTDSDLQ (78 aa)). The span at 114–131 (RKAKLAQQPKRKDKRQFN) shows a compositional bias: basic residues. A compositionally biased stretch (basic and acidic residues) spans 133–148 (PKGEKSANSDHADTKR). Low complexity predominate over residues 155–164 (NRPNTTPPAK).

It belongs to the ProQ family.

Its subcellular location is the cytoplasm. Functionally, RNA chaperone with significant RNA binding, RNA strand exchange and RNA duplexing activities. The sequence is that of RNA chaperone ProQ from Alteromonas mediterranea (strain DSM 17117 / CIP 110805 / LMG 28347 / Deep ecotype).